The chain runs to 585 residues: Probable multidrug resistance ABC transporter ATP-binding/permease protein YheI (585 aa).

The ABC transmembrane type-1 domain occupies 19–304; it reads YTIAIVLLLA…IGELINVMQR (286 aa). 6 helical membrane-spanning segments follow: residues 21 to 41, 57 to 77, 127 to 147, 149 to 169, 249 to 269, and 279 to 299; these read IAIVLLLAVNVIEMFPPKLLG, LLFYIGIFFVLTAAVYIMSYF, AVSLTTGFGILTLVDSTMFMM, IFLTMGFLISWKLTFAAIIPL, VKLLVGASYLIGLGYGAFLVF, and VSFNVYLGMMIWPMFAIGELI. The ABC transporter domain occupies 337–572; sequence IVFSHVSFTY…NGWYREQYER (236 aa). 371 to 378 is a binding site for ATP; it reads GKTGSGKT.

The protein belongs to the ABC transporter superfamily. In terms of assembly, heterodimer composed of YheH and YheI.

The protein resides in the cell membrane. Its activity is regulated as follows. Inhibited by ortho-vanadate. Functionally, involved in the transport of four structurally unrelated drugs, including doxorubicin and mitoxantrone. Transmembrane domains (TMD) form a pore in the membrane and the ATP-binding domain (NBD) is responsible for energy generation. The protein is Probable multidrug resistance ABC transporter ATP-binding/permease protein YheI (yheI) of Bacillus subtilis (strain 168).